A 450-amino-acid polypeptide reads, in one-letter code: Phosphoglucosamine mutase (450 aa).

Catalysis depends on Ser-101, which acts as the Phosphoserine intermediate. Residues Ser-101, Asp-240, Asp-242, and Asp-244 each contribute to the Mg(2+) site. Residue Ser-101 is modified to Phosphoserine.

It belongs to the phosphohexose mutase family. Requires Mg(2+) as cofactor. Activated by phosphorylation.

The catalysed reaction is alpha-D-glucosamine 1-phosphate = D-glucosamine 6-phosphate. Catalyzes the conversion of glucosamine-6-phosphate to glucosamine-1-phosphate. The chain is Phosphoglucosamine mutase from Streptococcus equi subsp. zooepidemicus (strain MGCS10565).